Here is a 319-residue protein sequence, read N- to C-terminus: MITFLPIIFSILIVVIFVVGNFANGFIALVNSIEWVKRQKISFVDQILTALAVSRVGLLWVLLLHWYATQLNPAFYSVEVRITVYNVWAVTNHFSSWLATSLSMFYLLKIANFSNLIFLRIKRRVKSVVLVILLGPLLFLVCHLFVINMDETIWTKEYEGNMTWKIKLKSAMYHSNMTLTILANFVPLTLTLISFLLLICSLCKHLKKMQLHGKGSQDPSTKVHIKALQTVTSFLLLCAIYFLSMIISVCNLGRLQKQPVFMFCQAIIFSYPSTHPFILILGNKKLKQIFLSVLWHVRYWVKDRSLRLHRFTRAALCKG.

Position 1 (Met-1) is a topological domain, extracellular. Residues 2–22 (ITFLPIIFSILIVVIFVVGNF) form a helical membrane-spanning segment. The Cytoplasmic segment spans residues 23 to 46 (ANGFIALVNSIEWVKRQKISFVDQ). The helical transmembrane segment at 47–67 (ILTALAVSRVGLLWVLLLHWY) threads the bilayer. Over 68-86 (ATQLNPAFYSVEVRITVYN) the chain is Extracellular. Residues 87–107 (VWAVTNHFSSWLATSLSMFYL) traverse the membrane as a helical segment. The Cytoplasmic portion of the chain corresponds to 108–126 (LKIANFSNLIFLRIKRRVK). Residues 127 to 147 (SVVLVILLGPLLFLVCHLFVI) traverse the membrane as a helical segment. Over 148–178 (NMDETIWTKEYEGNMTWKIKLKSAMYHSNMT) the chain is Extracellular. Residues Asn-161 and Asn-176 are each glycosylated (N-linked (GlcNAc...) asparagine). A helical transmembrane segment spans residues 179–199 (LTILANFVPLTLTLISFLLLI). The Cytoplasmic portion of the chain corresponds to 200-229 (CSLCKHLKKMQLHGKGSQDPSTKVHIKALQ). The chain crosses the membrane as a helical span at residues 230–250 (TVTSFLLLCAIYFLSMIISVC). The Extracellular segment spans residues 251-259 (NLGRLQKQP). Residues 260-280 (VFMFCQAIIFSYPSTHPFILI) form a helical membrane-spanning segment. At 281–319 (LGNKKLKQIFLSVLWHVRYWVKDRSLRLHRFTRAALCKG) the chain is on the cytoplasmic side.

The protein belongs to the G-protein coupled receptor T2R family.

The protein localises to the membrane. In terms of biological role, receptor that may play a role in the perception of bitterness and is gustducin-linked. May play a role in sensing the chemical composition of the gastrointestinal content. The activity of this receptor may stimulate alpha gustducin, mediate PLC-beta-2 activation and lead to the gating of TRPM5. This Pan paniscus (Pygmy chimpanzee) protein is Taste receptor type 2 member 30 (TAS2R30).